A 284-amino-acid polypeptide reads, in one-letter code: Bifunctional protein FolD 1 (284 aa).

NADP(+) is bound by residues 166–168 (GAS) and isoleucine 232.

This sequence belongs to the tetrahydrofolate dehydrogenase/cyclohydrolase family. Homodimer.

The enzyme catalyses (6R)-5,10-methylene-5,6,7,8-tetrahydrofolate + NADP(+) = (6R)-5,10-methenyltetrahydrofolate + NADPH. It catalyses the reaction (6R)-5,10-methenyltetrahydrofolate + H2O = (6R)-10-formyltetrahydrofolate + H(+). It functions in the pathway one-carbon metabolism; tetrahydrofolate interconversion. Catalyzes the oxidation of 5,10-methylenetetrahydrofolate to 5,10-methenyltetrahydrofolate and then the hydrolysis of 5,10-methenyltetrahydrofolate to 10-formyltetrahydrofolate. This is Bifunctional protein FolD 1 from Pseudomonas savastanoi pv. phaseolicola (strain 1448A / Race 6) (Pseudomonas syringae pv. phaseolicola (strain 1448A / Race 6)).